Here is a 121-residue protein sequence, read N- to C-terminus: LFAPNLLLDRNQGKCVEGMVESFDMLLATSSRFRMMNLQGEEFVCLKSIILLNSGVYTFLSSTLKSLEEKDHIHRVLDKITDTLIHLMAKAGLTLQQQHRRLAQLLLILSHIRHMSNKGME.

The region spanning 1–121 is the NR LBD domain; the sequence is LFAPNLLLDR…IRHMSNKGME (121 aa). The S-palmitoyl cysteine moiety is linked to residue Cys-45.

The protein belongs to the nuclear hormone receptor family. NR3 subfamily. In terms of assembly, binds DNA as a homodimer. Can form a heterodimer with ESR2. Interacts with coactivator NCOA5. Interacts with NCOA7; the interaction is ligand-inducible. Interacts with AKAP13, CUEDC2, HEXIM1, KDM5A, MAP1S, PELP1, SMARD1, and UBE1C. Interacts with MUC1; the interaction is stimulated by 7 beta-estradiol (E2) and enhances ERS1-mediated transcription. Interacts with DNTTIP2, and UIMC1. Interacts with KMT2D/MLL2. Interacts with ATAD2; the interaction is enhanced by estradiol. Interacts with KIF18A and LDB1. Interacts with RLIM (via its C-terminus). Interacts with MACROD1. Interacts with SH2D4A and PLCG. Interacts with SH2D4A; the interaction blocks binding to PLCG and inhibits estrogen-induced cell proliferation. Interacts with DYNLL1. Interacts with CCDC62; the interaction requires estradiol and appears to enhance the transcription of target genes. Interacts with NR2C1; the interaction prevents homodimerization of ESR1 and suppresses its transcriptional activity and cell growth. Interacts with DNAAF4. Interacts with PRMT2. Interacts with PI3KR1 or PIK3R2, SRC and PTK2/FAK1. Interacts with RBFOX2. Interacts with EP300; the interaction is estrogen-dependent and enhanced by CITED1. Interacts with CITED1; the interaction is estrogen-dependent. Interacts with FAM120B, FOXL2, PHB2 and SLC30A9. Interacts with coactivators NCOA3 and NCOA6. Interacts with STK3/MST2 only in the presence of SAV1 and vice-versa. Binds to CSNK1D. Interacts with NCOA2; NCOA2 can interact with ESR1 AF-1 and AF-2 domains simultaneously and mediate their transcriptional synergy. Interacts with DDX5. Interacts with NCOA1; the interaction seems to require a self-association of N-terminal and C-terminal regions. Interacts with ZNF366, DDX17, NFKB1, RELA, SP1 and SP3. Interacts with NRIP1. Interacts with GPER1; the interaction occurs in an estrogen-dependent manner. Interacts with CLOCK and the interaction is stimulated by estrogen. Interacts with TRIP4 (ufmylated); estrogen dependent. Interacts with LMTK3; the interaction phosphorylates ESR1 (in vitro) and protects it against proteasomal degradation. Interacts with CCAR2 (via N-terminus) in a ligand-independent manner. Interacts with ZFHX3. Interacts with SFR1 in a ligand-dependent and -independent manner. Interacts with DCAF13, LATS1 and DCAF1; regulates ESR1 ubiquitination and ubiquitin-mediated proteasomal degradation. Interacts (via DNA-binding domain) with POU4F2 (C-terminus); this interaction increases the estrogen receptor ESR1 transcriptional activity in a DNA- and ligand 17-beta-estradiol-independent manner. Interacts with ESRRB isoform 1. Interacts with UBE3A and WBP2. Interacts with GTF2B. Interacts with RBM39. In the absence of hormonal ligand, interacts with TACC1. Interacts with BAG1; the interaction is promoted in the absence of estradiol (17-beta-estradiol/E2). Interacts with and ubiquitinated by STUB1; the interaction is promoted in the absence of estradiol (17-beta-estradiol/E2). Interacts with NEDD8. In terms of processing, ubiquitinated; regulated by LATS1 via DCAF1 it leads to ESR1 proteasomal degradation. Deubiquitinated by OTUB1. Ubiquitinated by STUB1/CHIP; in the CA1 hippocampal region following loss of endogenous circulating estradiol (17-beta-estradiol/E2). Ubiquitinated by UBR5, leading to its degradation: UBR5 specifically recognizes and binds ligand-bound ESR1 when it is not associated with coactivators (NCOAs). In presence of NCOAs, the UBR5-degron is not accessible, preventing its ubiquitination and degradation. Post-translationally, palmitoylated at Cys-45 by ZDHHC7 and ZDHHC21. Palmitoylation is required for plasma membrane targeting and for rapid intracellular signaling via ERK and AKT kinases and cAMP generation, but not for signaling mediated by the nuclear hormone receptor. Phosphorylated by cyclin A/CDK2 and CK1. Phosphorylation probably enhances transcriptional activity. Dephosphorylation by PPP5C inhibits its transactivation activity. Phosphorylated by LMTK3 (in vitro). In terms of processing, dimethylated by PRMT1. Demethylated by JMJD6.

The protein localises to the nucleus. Its subcellular location is the cytoplasm. The protein resides in the golgi apparatus. It localises to the cell membrane. Its function is as follows. Nuclear hormone receptor. The steroid hormones and their receptors are involved in the regulation of eukaryotic gene expression and affect cellular proliferation and differentiation in target tissues. Ligand-dependent nuclear transactivation involves either direct homodimer binding to a palindromic estrogen response element (ERE) sequence or association with other DNA-binding transcription factors, such as AP-1/c-Jun, c-Fos, ATF-2, Sp1 and Sp3, to mediate ERE-independent signaling. Ligand binding induces a conformational change allowing subsequent or combinatorial association with multiprotein coactivator complexes through LXXLL motifs of their respective components. Mutual transrepression occurs between the estrogen receptor (ER) and NF-kappa-B in a cell-type specific manner. Decreases NF-kappa-B DNA-binding activity and inhibits NF-kappa-B-mediated transcription from the IL6 promoter and displace RELA/p65 and associated coregulators from the promoter. Recruited to the NF-kappa-B response element of the CCL2 and IL8 promoters and can displace CREBBP. Present with NF-kappa-B components RELA/p65 and NFKB1/p50 on ERE sequences. Can also act synergistically with NF-kappa-B to activate transcription involving respective recruitment adjacent response elements; the function involves CREBBP. Can activate the transcriptional activity of TFF1. Also mediates membrane-initiated estrogen signaling involving various kinase cascades. Essential for MTA1-mediated transcriptional regulation of BRCA1 and BCAS3. Maintains neuronal survival in response to ischemic reperfusion injury when in the presence of circulating estradiol (17-beta-estradiol/E2). The chain is Estrogen receptor (ESR1) from Macaca mulatta (Rhesus macaque).